A 192-amino-acid polypeptide reads, in one-letter code: MTEYALILISTVLVNNFVLVKFLGLCPFMGVSRKVETATGMGLATTFVLTLSSVCSYLVNEYLLAPLGLEYLRTIAFILVIAAVVQFTEMVVHKTSPLLYNVLGIFLPLITTNCAVLGVALLNVQEAHGFIESALYGLGAAVGFSLVLVLFASIRERVAVADVPLPFKGNAIALITAGLMSLGFMGFIGLVK.

Transmembrane regions (helical) follow at residues 5–25 (ALIL…FLGL), 39–59 (TGMG…SYLV), 65–85 (APLG…AAVV), 102–122 (VLGI…VALL), 134–154 (ALYG…FASI), and 171–191 (AIAL…IGLV).

This sequence belongs to the NqrDE/RnfAE family. The complex is composed of six subunits: RnfA, RnfB, RnfC, RnfD, RnfE and RnfG.

It is found in the cell inner membrane. In terms of biological role, part of a membrane-bound complex that couples electron transfer with translocation of ions across the membrane. In Thioalkalivibrio sulfidiphilus (strain HL-EbGR7), this protein is Ion-translocating oxidoreductase complex subunit A.